The following is an 855-amino-acid chain: DNA mismatch repair protein MutS (855 aa).

621–628 (GPNMGGKS) provides a ligand contact to ATP.

It belongs to the DNA mismatch repair MutS family.

Its function is as follows. This protein is involved in the repair of mismatches in DNA. It is possible that it carries out the mismatch recognition step. This protein has a weak ATPase activity. In Francisella tularensis subsp. holarctica (strain OSU18), this protein is DNA mismatch repair protein MutS.